Here is a 112-residue protein sequence, read N- to C-terminus: Nitrogen regulatory protein GlnK2 (112 aa).

ADP-binding positions include T29, 38 to 39, V64, and 87 to 90; these read QQ and GDGK. Residues T29, 38–39, V64, 87–90, and 101–103 contribute to the ATP site; these read QQ, GDGK, and RIR.

This sequence belongs to the P(II) protein family. In terms of assembly, homotrimer. Interacts and forms a complex with Amt2.

The protein localises to the cytoplasm. Binding of adenosine nucleotides results in distinct, cooperative behavior for ATP and ADP. GlnK2 is completely insensitive to 2-oxoglutarate at a low level of intracellular nitrogen. Involved in the regulation of nitrogen metabolism. Regulates the activity of its targets by protein-protein interaction in response to the nitrogen status of the cell. Regulates the activity of the ammonia channel Amt2 via direct interaction. In Archaeoglobus fulgidus (strain ATCC 49558 / DSM 4304 / JCM 9628 / NBRC 100126 / VC-16), this protein is Nitrogen regulatory protein GlnK2.